Reading from the N-terminus, the 115-residue chain is Small ribosomal subunit protein uS17 (115 aa).

Belongs to the universal ribosomal protein uS17 family. As to quaternary structure, part of the 30S ribosomal subunit.

Its function is as follows. One of the primary rRNA binding proteins, it binds specifically to the 5'-end of 16S ribosomal RNA. This chain is Small ribosomal subunit protein uS17, found in Granulibacter bethesdensis (strain ATCC BAA-1260 / CGDNIH1).